The primary structure comprises 209 residues: Imidazole glycerol phosphate synthase subunit HisH (209 aa).

Residues 1–205 (MIAIIDYGMG…KGVVETWKSS (205 aa)) enclose the Glutamine amidotransferase type-1 domain. The Nucleophile role is filled by C79. Catalysis depends on residues H180 and E182.

In terms of assembly, heterodimer of HisH and HisF.

The protein resides in the cytoplasm. The enzyme catalyses 5-[(5-phospho-1-deoxy-D-ribulos-1-ylimino)methylamino]-1-(5-phospho-beta-D-ribosyl)imidazole-4-carboxamide + L-glutamine = D-erythro-1-(imidazol-4-yl)glycerol 3-phosphate + 5-amino-1-(5-phospho-beta-D-ribosyl)imidazole-4-carboxamide + L-glutamate + H(+). The catalysed reaction is L-glutamine + H2O = L-glutamate + NH4(+). The protein operates within amino-acid biosynthesis; L-histidine biosynthesis; L-histidine from 5-phospho-alpha-D-ribose 1-diphosphate: step 5/9. Its function is as follows. IGPS catalyzes the conversion of PRFAR and glutamine to IGP, AICAR and glutamate. The HisH subunit catalyzes the hydrolysis of glutamine to glutamate and ammonia as part of the synthesis of IGP and AICAR. The resulting ammonia molecule is channeled to the active site of HisF. This Bacillus anthracis (strain CDC 684 / NRRL 3495) protein is Imidazole glycerol phosphate synthase subunit HisH.